The chain runs to 50 residues: Ampulexin 1 (50 aa).

An N-terminal signal peptide occupies residues 1-26; that stretch reads MKAIMVLFYVMMLTIIASVSMVNGSP.

In terms of assembly, monomer. In terms of tissue distribution, expressed in venom sac and, to a lesser extent, in venom gland. Not expressed in brain.

The protein resides in the secreted. Amphipathic peptide which probably adopts an alpha-helical structure. When injected in subesophageal ganglia of cockroach P.americana, a natural host for larvae of A.compressa, dampens the escape response for about 1 hour which may contribute to early stages of hypokinesia. Has no antimicrobial activity against E.coli DH5alpha or B.thuringiensis. Is not cytotoxic in vitro. The polypeptide is Ampulexin 1 (Ampulex compressa (Emerald cockroach wasp)).